Reading from the N-terminus, the 198-residue chain is Armadillo repeat-containing protein 7 (198 aa).

ARM repeat units lie at residues 57-99 (QVLD…HAGG) and 100-140 (VPLI…TATP). Ser169 carries the phosphoserine modification.

In terms of assembly, component of the minor spliceosome. Within this complex, interacts with RBM48.

As a component of the minor spliceosome, involved in the splicing of U12-type introns in pre-mRNAs. The chain is Armadillo repeat-containing protein 7 (ARMC7) from Homo sapiens (Human).